A 194-amino-acid chain; its full sequence is PPE family protein PPE41 (194 aa).

It belongs to the mycobacterial PPE family. As to quaternary structure, forms a heterodimer with PE25. The dimer forms a 1:1:1 heterotrimeric complex with EspG5. PPE41 interacts directly with EspG5.

The protein resides in the secreted. Its subcellular location is the cell surface. Its function is as follows. The PE25/PPE41 dimer induces both a strong humoral and cellular immune response. The dimer induces necrosis, but not apoptosis, in mouse macrophage cells. It also induces activation and maturation of mouse dendritic cells and drives Th2-biased immune responses. This is PPE family protein PPE41 from Mycobacterium tuberculosis (strain ATCC 25618 / H37Rv).